Here is a 730-residue protein sequence, read N- to C-terminus: Matrix metalloproteinase-9 (730 aa).

The N-terminal stretch at 1–19 (MSPWQPLLLALLAFGCSSA) is a signal peptide. Residues 20-107 (APYQRQPTFV…PRCGVPDVGR (88 aa)) constitute a propeptide, activation peptide. Asn-39 carries an N-linked (GlcNAc...) asparagine glycan. The Cysteine switch signature appears at 98–105 (PRCGVPDV). Residue Cys-100 coordinates Zn(2+). N-linked (GlcNAc...) asparagine glycans are attached at residues Asn-120 and Asn-127. Positions 131 and 165 each coordinate Ca(2+). Positions 175 and 177 each coordinate Zn(2+). Ca(2+)-binding residues include Asp-182, Gly-183, Asp-185, and Leu-187. His-190 is a binding site for Zn(2+). 3 residues coordinate Ca(2+): Gly-197, Gln-199, and Asp-201. Residue His-203 coordinates Zn(2+). Asp-205, Asp-206, and Glu-208 together coordinate Ca(2+). 3 consecutive Fibronectin type-II domains span residues 225–273 (SNGA…FCPS), 283–331 (GEGK…FCPT), and 342–390 (SAGE…FCPD). Disulfide bonds link Cys-230–Cys-256, Cys-244–Cys-271, Cys-288–Cys-314, Cys-302–Cys-329, Cys-347–Cys-373, and Cys-361–Cys-388. A Zn(2+)-binding site is contributed by His-401. Glu-402 is a catalytic residue. Zn(2+)-binding residues include His-405 and His-411. Residues 442–529 (LYGRGSKPDP…SEASTESLSP (88 aa)) are disordered. The segment covering 463–477 (PTAPPTMCPTIPPTA) has biased composition (pro residues). The segment covering 478 to 489 (YPTVGPTVGPTG) has biased composition (low complexity). The segment covering 490-514 (APSPGPTSSPSPGPTGAPSPGPTAP) has biased composition (pro residues). Residues Cys-534 and Cys-729 are joined by a disulfide bond. 4 Hemopexin repeats span residues 536–581 (VDVF…WPAL), 582–626 (PATL…GLGP), 628–675 (VTHV…FSGV), and 676–729 (PWNS…LLQC).

This sequence belongs to the peptidase M10A family. In terms of assembly, exists as monomer or homodimer; disulfide-linked. Also exists as heterodimer with LCN2. Macrophages and transformed cell lines produce only the monomeric form. Interacts with ECM1. Requires Zn(2+) as cofactor. Ca(2+) is required as a cofactor. Post-translationally, N- and O-glycosylated.

It is found in the secreted. Its subcellular location is the extracellular space. It localises to the extracellular matrix. It catalyses the reaction Cleavage of gelatin types I and V and collagen types IV and V.. With respect to regulation, inhibited by histatin-3 1/24 (histatin-5). Inhibited by ECM1. Matrix metalloproteinase that plays an essential role in local proteolysis of the extracellular matrix and in leukocyte migration. Could play a role in bone osteoclastic resorption. Cleaves KiSS1 at a Gly-|-Leu bond. Cleaves NINJ1 to generate the Secreted ninjurin-1 form. Cleaves type IV and type V collagen into large C-terminal three quarter fragments and shorter N-terminal one quarter fragments. Degrades fibronectin but not laminin or Pz-peptide. This is Matrix metalloproteinase-9 (Mmp9) from Mus musculus (Mouse).